The chain runs to 309 residues: Probable cell division protein WhiA (309 aa).

The H-T-H motif DNA-binding region spans Ser-275–Ala-309.

It belongs to the WhiA family.

Its function is as follows. Involved in cell division and chromosome segregation. The chain is Probable cell division protein WhiA from Pediococcus pentosaceus (strain ATCC 25745 / CCUG 21536 / LMG 10740 / 183-1w).